The sequence spans 244 residues: tRNA pseudouridine synthase A (244 aa).

Aspartate 52 serves as the catalytic Nucleophile. Tyrosine 110 is a binding site for substrate.

The protein belongs to the tRNA pseudouridine synthase TruA family. Homodimer.

The enzyme catalyses uridine(38/39/40) in tRNA = pseudouridine(38/39/40) in tRNA. Functionally, formation of pseudouridine at positions 38, 39 and 40 in the anticodon stem and loop of transfer RNAs. The protein is tRNA pseudouridine synthase A of Pelobacter propionicus (strain DSM 2379 / NBRC 103807 / OttBd1).